The primary structure comprises 397 residues: uncharacterized protein (397 aa).

Residues 368–391 (TTKPGLHQPTQKRPTQTTSKPYIN) form a disordered region. Residues 375 to 388 (QPTQKRPTQTTSKP) show a composition bias toward polar residues.

This is an uncharacterized protein from Acanthamoeba polyphaga mimivirus (APMV).